We begin with the raw amino-acid sequence, 513 residues long: MQLNSTEISELIKKRIAQFDVVSEAQSTGTIVSVSDGIIRIHGLADVMQGEMIELPGNRYAIALNLERDSVGAVVMGPYADLAEGMSVKCTGRILEVPVGRGLLGRVVNTLGQPIDGKGEIDNDGFSPVEVIAPGVIDRQSVDQPVQTGYKAVDSMVPIGRGQRELIIGDRQTGKTALAIDAIIAQKDSGIKCIYVAIGQKASTIANVVRKLEEHGALANTIVVVASASESAALQYLAPYSGCAMGEYFRDRGEDALIVYDDLSKQAVAYRQISLLLRRPPGREAFPGDVFYLHSRLLERAARVSADYVESFTNGAVKGQTGSLTALPIIETQAGDVSAFVPTNVISITDGQIFLESSLFNSGIRPAVNPGISVSRVGSAAQTKAIKKLSGGIRTALAQYRELAAFAQFASDLDDATRKQLSHGQKVTELLKQKQFAPMPVSEQALVLFAAEFGYLDDVELERIGSFESALLAYANSNHTDFMKNLAKSGDYNDSIKDQLKAIVEDFKKNGAW.

An ATP-binding site is contributed by 169–176 (GDRQTGKT).

It belongs to the ATPase alpha/beta chains family. As to quaternary structure, F-type ATPases have 2 components, CF(1) - the catalytic core - and CF(0) - the membrane proton channel. CF(1) has five subunits: alpha(3), beta(3), gamma(1), delta(1), epsilon(1). CF(0) has three main subunits: a(1), b(2) and c(9-12). The alpha and beta chains form an alternating ring which encloses part of the gamma chain. CF(1) is attached to CF(0) by a central stalk formed by the gamma and epsilon chains, while a peripheral stalk is formed by the delta and b chains.

It is found in the cell inner membrane. The catalysed reaction is ATP + H2O + 4 H(+)(in) = ADP + phosphate + 5 H(+)(out). Its function is as follows. Produces ATP from ADP in the presence of a proton gradient across the membrane. The alpha chain is a regulatory subunit. The protein is ATP synthase subunit alpha of Actinobacillus pleuropneumoniae serotype 7 (strain AP76).